The primary structure comprises 262 residues: Tetrahydromethanopterin S-methyltransferase subunit C (262 aa).

6 helical membrane passes run 35–57 (FVPS…AGAN), 70–92 (GVPS…GVLI), 97–119 (GLPV…FIVG), 140–162 (LSLM…FSAD), 172–194 (GVIA…ACIG), and 214–236 (WLIF…FWLY).

It belongs to the MtrC family. As to quaternary structure, the complex is composed of 8 subunits; MtrA, MtrB, MtrC, MtrD, MtrE, MtrF, MtrG and MtrH.

The protein resides in the cell membrane. The enzyme catalyses 5-methyl-5,6,7,8-tetrahydromethanopterin + coenzyme M + 2 Na(+)(in) = 5,6,7,8-tetrahydromethanopterin + methyl-coenzyme M + 2 Na(+)(out). It participates in one-carbon metabolism; methanogenesis from CO(2); methyl-coenzyme M from 5,10-methylene-5,6,7,8-tetrahydromethanopterin: step 2/2. Part of a complex that catalyzes the formation of methyl-coenzyme M and tetrahydromethanopterin from coenzyme M and methyl-tetrahydromethanopterin. This is an energy-conserving, sodium-ion translocating step. The polypeptide is Tetrahydromethanopterin S-methyltransferase subunit C (Methanococcus maripaludis (strain DSM 14266 / JCM 13030 / NBRC 101832 / S2 / LL)).